The following is a 593-amino-acid chain: MAAASSSDSDACGAESNEANSKWLDAHYDPMANIHTFSACLALADLHGDGEYKLVVGDLGPGGQQPRLKVLKGPLVMTESPLPALPAAAATFLMEQHEPRTPALALASGPCVYVYKNLRPYFKFSLPQLPPNPLEQDLWNQAKEDRIDPLTLKEMLESIRETAEEPLSIQSLRFLQLELSEMEAFVNQHKSNSIKRQTVITTMTTLKKNLADEDAVSCLVLGTENKELLVLDPEAFTILAKMSLPSVPVFLEVSGQFDVEFRLAAACRNGNIYILRRDSKHPKYCIELSAQPVGLIRVHKVLVVGSTQDSLHGFTHKGKKLWTVQMPAAILTMNLLEQHSRGLQAVMAGLANGEVRIYRDKALLNVIHTPDAVTSLCFGRYGREDNTLIMTTRGGGLIIKILKRTAVFVEGGSEVGPPPAQAMKLNVPRKTRLYVDQTLREREAGTAMHRAFQTDLYLLRLRAARAYLQALESSLSPLSTTAREPLKLHAVVQGLGPTFKLTLHLQNTSTTRPVLGLLVCFLYNEALYSLPRAFFKVPLLVPGLNYPLETFVESLSNKGISDIIKVLVLREGQSAPLLSAHVNMPGSEGLAAA.

A2 carries the post-translational modification N-acetylalanine.

In terms of assembly, part of BBSome complex, that contains BBS1, BBS2, BBS4, BBS5, BBS7, BBS8/TTC8, BBS9 and BBIP10. Interacts with the C-terminus of RAB3IP. Interacts with CCDC28B and ALDOB. Interacts with PKD1. In terms of tissue distribution, highly expressed in the kidney. Also found in fetal tissue, testis, retina, adipose tissue, heart, skeletal muscle and pancreas.

The protein localises to the cell projection. It is found in the cilium membrane. Its subcellular location is the cytoplasm. The protein resides in the cytoskeleton. It localises to the microtubule organizing center. The protein localises to the centrosome. It is found in the centriolar satellite. The BBSome complex is thought to function as a coat complex required for sorting of specific membrane proteins to the primary cilia. The BBSome complex is required for ciliogenesis but is dispensable for centriolar satellite function. This ciliogenic function is mediated in part by the Rab8 GDP/GTP exchange factor, which localizes to the basal body and contacts the BBSome. Rab8(GTP) enters the primary cilium and promotes extension of the ciliary membrane. Firstly the BBSome associates with the ciliary membrane and binds to RAB3IP/Rabin8, the guanosyl exchange factor (GEF) for Rab8 and then the Rab8-GTP localizes to the cilium and promotes docking and fusion of carrier vesicles to the base of the ciliary membrane. The BBSome complex, together with the LTZL1, controls SMO ciliary trafficking and contributes to the sonic hedgehog (SHH) pathway regulation. Required for proper BBSome complex assembly and its ciliary localization. Plays a role in olfactory cilium biogenesis/maintenance and trafficking. The sequence is that of BBSome complex member BBS1 (BBS1) from Homo sapiens (Human).